A 302-amino-acid chain; its full sequence is Recombination-associated protein RdgC (302 aa).

It belongs to the RdgC family.

It localises to the cytoplasm. The protein resides in the nucleoid. May be involved in recombination. The polypeptide is Recombination-associated protein RdgC (Tolumonas auensis (strain DSM 9187 / NBRC 110442 / TA 4)).